The chain runs to 292 residues: GTP cyclohydrolase FolE2 (292 aa).

It belongs to the GTP cyclohydrolase IV family.

It catalyses the reaction GTP + H2O = 7,8-dihydroneopterin 3'-triphosphate + formate + H(+). The protein operates within cofactor biosynthesis; 7,8-dihydroneopterin triphosphate biosynthesis; 7,8-dihydroneopterin triphosphate from GTP: step 1/1. Its function is as follows. Converts GTP to 7,8-dihydroneopterin triphosphate. This is GTP cyclohydrolase FolE2 from Staphylococcus aureus (strain MRSA252).